Here is a 2609-residue protein sequence, read N- to C-terminus: Beige protein homolog 1 (2609 aa).

Disordered stretches follow at residues aspartate 1654–serine 1679 and isoleucine 1691–threonine 1729. Residues methionine 1711 to lysine 1723 show a composition bias toward acidic residues. The BEACH-type PH domain occupies glutamate 1735–valine 1870. Residues alanine 1907–arginine 2202 enclose the BEACH domain. 5 WD repeats span residues lysine 2249 to methionine 2290, leucine 2294 to alanine 2332, glycine 2340 to serine 2379, asparagine 2429 to leucine 2475, and alanine 2507 to histidine 2546. An FYVE-type zinc finger spans residues aspartate 2550 to proline 2604.

It localises to the cytoplasm. It is found in the membrane. In terms of biological role, may be involved in protein sorting and cell wall formation. The polypeptide is Beige protein homolog 1 (lvs1) (Schizosaccharomyces pombe (strain 972 / ATCC 24843) (Fission yeast)).